We begin with the raw amino-acid sequence, 652 residues long: Neuroendocrine convertase 2 (652 aa).

The N-terminal stretch at 1–22 (MKNTHVDLICVFLSIFIGIGEA) is a signal peptide. The propeptide occupies 23–107 (VDVYTNHFHV…QLKGYTRTKR (85 aa)). Residues 136 to 481 (QWYLKNTGQA…FGVLDAAEMV (346 aa)) form the Peptidase S8 domain. An N-linked (GlcNAc...) asparagine glycan is attached at N167. Residues D174 and H215 each act as charge relay system in the active site. Disulfide bonds link C232/C382 and C324/C354. N-linked (GlcNAc...) asparagine glycosylation is present at N290. S390 serves as the catalytic Charge relay system. N451 is a glycosylation site (N-linked (GlcNAc...) asparagine). The region spanning 489-625 (TSPPRYHCTA…ELMLHGTREA (137 aa)) is the P/Homo B domain. A disulfide bridge connects residues C496 and C522. The tract at residues 501–652 (IDTPHEIPAD…TVQKAHKRSH (152 aa)) is required for ubiquitination-mediated degradation. N542 carries an N-linked (GlcNAc...) asparagine glycan.

It belongs to the peptidase S8 family. Furin subfamily. In terms of assembly, interacts (via C-terminus) with F-box protein fsn-1 (via SPRY domain); the interaction results in egl-3 proteasomal degradation. In terms of processing, ubiquitinated. In terms of tissue distribution, expressed in head and tail ganglia. Expressed in neurons including mechanosensory and motor neurons, and interneurons (at protein level). Expressed in the nerve ring, ventral nerve cord and intestine.

Its subcellular location is the cell projection. It localises to the axon. The protein localises to the cytoplasmic vesicle. The protein resides in the secretory vesicle lumen. It is found in the secreted. The catalysed reaction is Release of protein hormones and neuropeptides from their precursors, generally by hydrolysis of -Lys-Arg-|- bonds.. Serine endoprotease which cleaves preproteins at paired basic amino acids. Processes FMRFamide-like (flp) and neuropeptide-like protein (nlp) neuropeptides. Probably by processing flp-1 and flp-18, modulates the neuronal excitation-inhibition balance and thus the level of activity of the locomotor circuit. Regulates sensitivity to mechanosensory stimuli. By processing neuropeptides, modulates basal acetylcholine release at the ventral cord neuromuscular junctions. Probably by processing flp neuropeptides, regulates the turning step of male mating behavior. Cleaves pro-insulin-like proteins ins-3, ins-4 and ins-6 into their mature active forms. Together with convertase kpc-1, cleaves pro-insulin-like protein ins-18. By controlling ins-4 and ins-6 processing and thus the activation of the daf-2/InsR pathway, negatively modulates synapse development and synaptic transmission at neuromuscular junctions. Similarly, by controlling ins-4 and ins-6 processing, negatively regulates dauer formation under optimal environmental conditions. Under adverse environmental conditions, may promote dauer formation by processing ins-18, a daf-2/InsR antagonist. May cleave dense-core vesicle membrane protein ida-1. Involved in egg-laying, fat storage and locomotion. The protein is Neuroendocrine convertase 2 of Caenorhabditis elegans.